The chain runs to 248 residues: Coproheme decarboxylase (248 aa).

Residues Arg130, 144–148, His171, Gln184, and Ser222 contribute to the Fe-coproporphyrin III site; that span reads YPMDK. Tyr144 is a catalytic residue.

This sequence belongs to the ChdC family. Type 1 subfamily. Requires Fe-coproporphyrin III as cofactor.

The catalysed reaction is Fe-coproporphyrin III + 2 H2O2 + 2 H(+) = heme b + 2 CO2 + 4 H2O. The enzyme catalyses Fe-coproporphyrin III + H2O2 + H(+) = harderoheme III + CO2 + 2 H2O. It catalyses the reaction harderoheme III + H2O2 + H(+) = heme b + CO2 + 2 H2O. It functions in the pathway porphyrin-containing compound metabolism; protoheme biosynthesis. In terms of biological role, involved in coproporphyrin-dependent heme b biosynthesis. Catalyzes the decarboxylation of Fe-coproporphyrin III (coproheme) to heme b (protoheme IX), the last step of the pathway. The reaction occurs in a stepwise manner with a three-propionate intermediate. In Geobacillus sp. (strain WCH70), this protein is Coproheme decarboxylase.